A 105-amino-acid polypeptide reads, in one-letter code: Met repressor (105 aa).

Belongs to the MetJ family. Homodimer.

It localises to the cytoplasm. This regulatory protein, when combined with SAM (S-adenosylmethionine) represses the expression of the methionine regulon and of enzymes involved in SAM synthesis. The protein is Met repressor of Actinobacillus pleuropneumoniae serotype 7 (strain AP76).